The primary structure comprises 236 residues: MAQYKRILLKLSGESLMGGKQYGIDEVRLNEYAAQIKEIAEMGVQIGIVIGGGNIFRGLSGASKGFDRVKGDQMGMLATVINSLALSSALVAQGVNAKVLTAIRMEPIGEFYNKWRAIELLEQGNVVIMSGGTGNPFFTTDTGSSLRGIEIEADVMLKGTRVDGIYTADPEKDPTATKFSDITYDEIYTRGLKVMDLTATTMCKENNLPIIVFDMDTNGNLKKVMSGENIGTLVHN.

10-13 provides a ligand contact to ATP; sequence KLSG. UMP is bound at residue Gly52. Positions 53 and 57 each coordinate ATP. Residues Asp72 and 133-140 contribute to the UMP site; that span reads TGNPFFTT. Thr160, Tyr166, and Asp169 together coordinate ATP.

Belongs to the UMP kinase family. Homohexamer.

Its subcellular location is the cytoplasm. It carries out the reaction UMP + ATP = UDP + ADP. The protein operates within pyrimidine metabolism; CTP biosynthesis via de novo pathway; UDP from UMP (UMPK route): step 1/1. With respect to regulation, inhibited by UTP. In terms of biological role, catalyzes the reversible phosphorylation of UMP to UDP. The sequence is that of Uridylate kinase from Parabacteroides distasonis (strain ATCC 8503 / DSM 20701 / CIP 104284 / JCM 5825 / NCTC 11152).